Here is a 388-residue protein sequence, read N- to C-terminus: S-adenosylmethionine synthase (388 aa).

An ATP-binding site is contributed by H14. Residue D16 coordinates Mg(2+). E42 is a K(+) binding site. Residues E55 and Q98 each contribute to the L-methionine site. The tract at residues 98–108 (QSAEISSAVDQ) is flexible loop. ATP is bound by residues 166-168 (DGK), D242, 248-249 (RK), A265, and K269. D242 contacts L-methionine. An L-methionine-binding site is contributed by K273.

It belongs to the AdoMet synthase family. In terms of assembly, homotetramer; dimer of dimers. It depends on Mg(2+) as a cofactor. Requires K(+) as cofactor.

The protein resides in the cytoplasm. The enzyme catalyses L-methionine + ATP + H2O = S-adenosyl-L-methionine + phosphate + diphosphate. It participates in amino-acid biosynthesis; S-adenosyl-L-methionine biosynthesis; S-adenosyl-L-methionine from L-methionine: step 1/1. In terms of biological role, catalyzes the formation of S-adenosylmethionine (AdoMet) from methionine and ATP. The overall synthetic reaction is composed of two sequential steps, AdoMet formation and the subsequent tripolyphosphate hydrolysis which occurs prior to release of AdoMet from the enzyme. The protein is S-adenosylmethionine synthase of Oenococcus oeni (strain ATCC BAA-331 / PSU-1).